The primary structure comprises 356 residues: Anthranilate phosphoribosyltransferase (356 aa).

5-phospho-alpha-D-ribose 1-diphosphate is bound by residues G96, 99–100 (GD), T104, 106–109 (NIST), 124–132 (KHGNRSASG), and S136. Residue G96 participates in anthranilate binding. S108 provides a ligand contact to Mg(2+). Residue N127 coordinates anthranilate. Anthranilate is bound at residue R182. Mg(2+) contacts are provided by D241 and E242.

It belongs to the anthranilate phosphoribosyltransferase family. In terms of assembly, homodimer. It depends on Mg(2+) as a cofactor.

The catalysed reaction is N-(5-phospho-beta-D-ribosyl)anthranilate + diphosphate = 5-phospho-alpha-D-ribose 1-diphosphate + anthranilate. It participates in amino-acid biosynthesis; L-tryptophan biosynthesis; L-tryptophan from chorismate: step 2/5. Its function is as follows. Catalyzes the transfer of the phosphoribosyl group of 5-phosphorylribose-1-pyrophosphate (PRPP) to anthranilate to yield N-(5'-phosphoribosyl)-anthranilate (PRA). This chain is Anthranilate phosphoribosyltransferase, found in Trichodesmium erythraeum (strain IMS101).